A 203-amino-acid chain; its full sequence is Thymidylate kinase (203 aa).

Residue 7-14 coordinates ATP; sequence GGEGAGKT.

This sequence belongs to the thymidylate kinase family.

The catalysed reaction is dTMP + ATP = dTDP + ADP. In terms of biological role, phosphorylation of dTMP to form dTDP in both de novo and salvage pathways of dTTP synthesis. The sequence is that of Thymidylate kinase (tmk) from Chlamydia muridarum (strain MoPn / Nigg).